A 642-amino-acid polypeptide reads, in one-letter code: Threonine--tRNA ligase (642 aa).

Residues 1-63 (MSTVTVTLPD…TADVELEIVT (63 aa)) form the TGS domain. The segment at 242–533 (DHRKIGQEMD…LTEHYNGKFP (292 aa)) is catalytic. Zn(2+)-binding residues include Cys-334, His-385, and His-510.

Belongs to the class-II aminoacyl-tRNA synthetase family. As to quaternary structure, homodimer. Zn(2+) serves as cofactor.

It localises to the cytoplasm. It carries out the reaction tRNA(Thr) + L-threonine + ATP = L-threonyl-tRNA(Thr) + AMP + diphosphate + H(+). Its function is as follows. Catalyzes the attachment of threonine to tRNA(Thr) in a two-step reaction: L-threonine is first activated by ATP to form Thr-AMP and then transferred to the acceptor end of tRNA(Thr). The polypeptide is Threonine--tRNA ligase (Haloarcula marismortui (strain ATCC 43049 / DSM 3752 / JCM 8966 / VKM B-1809) (Halobacterium marismortui)).